A 121-amino-acid chain; its full sequence is Small ribosomal subunit protein uS13 (121 aa).

Positions 92–121 are disordered; that stretch reads HRMGLPCRGQKTKTNARTRKGPRRGAARRK. Over residues 101–121 the composition is skewed to basic residues; it reads QKTKTNARTRKGPRRGAARRK.

Belongs to the universal ribosomal protein uS13 family. Part of the 30S ribosomal subunit. Forms a loose heterodimer with protein S19. Forms two bridges to the 50S subunit in the 70S ribosome.

In terms of biological role, located at the top of the head of the 30S subunit, it contacts several helices of the 16S rRNA. In the 70S ribosome it contacts the 23S rRNA (bridge B1a) and protein L5 of the 50S subunit (bridge B1b), connecting the 2 subunits; these bridges are implicated in subunit movement. Contacts the tRNAs in the A and P-sites. In Desulfotalea psychrophila (strain LSv54 / DSM 12343), this protein is Small ribosomal subunit protein uS13.